A 65-amino-acid polypeptide reads, in one-letter code: Small ribosomal subunit protein bS21B (65 aa).

The protein belongs to the bacterial ribosomal protein bS21 family.

The chain is Small ribosomal subunit protein bS21B from Francisella tularensis subsp. holarctica (strain LVS).